Reading from the N-terminus, the 915-residue chain is Metabotropic glutamate receptor 7 (915 aa).

The signal sequence occupies residues Met1–Gly34. The Extracellular portion of the chain corresponds to Gln35–Trp590. Cys67 and Cys109 are disulfide-bonded. N-linked (GlcNAc...) asparagine glycosylation occurs at Asn98. L-glutamate-binding positions include Ser159, Ala180–Thr182, Tyr230, and Asp314. 7 disulfide bridges follow: Cys249/Cys541, Cys374/Cys390, Cys430/Cys437, Cys523/Cys542, Cys527/Cys545, Cys548/Cys560, and Cys563/Cys576. Lys407 serves as a coordination point for L-glutamate. Residues Asn458 and Asn486 are each glycosylated (N-linked (GlcNAc...) asparagine). Asn572 carries an N-linked (GlcNAc...) asparagine glycan. Residues Ala591 to Tyr615 traverse the membrane as a helical segment. Residues Asn616–Glu627 are Cytoplasmic-facing. Residues Leu628–Ala648 traverse the membrane as a helical segment. Over Lys649–Val654 the chain is Extracellular. A helical transmembrane segment spans residues Cys655 to Thr675. The Cytoplasmic segment spans residues Lys676–Gln702. Residues Leu703–Val723 traverse the membrane as a helical segment. The Extracellular segment spans residues Asp724–Asp753. Residues Leu754–Ile775 traverse the membrane as a helical segment. The Cytoplasmic portion of the chain corresponds to Lys776 to Lys788. A helical transmembrane segment spans residues Pro789–Gly810. Residues Thr811 to Leu825 lie on the Extracellular side of the membrane. Residues Thr826–Phe850 traverse the membrane as a helical segment. At His851–Ile915 the chain is on the cytoplasmic side. The disordered stretch occupies residues Ser874–Asn895. Basic and acidic residues predominate over residues Lys879–Leu892. Ser900 carries the post-translational modification Phosphoserine.

The protein belongs to the G-protein coupled receptor 3 family. In terms of assembly, homodimer. Interacts with PICK1. As to expression, widely distributed throughout the brain.

It is found in the cell membrane. Functionally, G-protein coupled receptor activated by glutamate that regulates axon outgrowth through the MAPK-cAMP-PKA signaling pathway during neuronal development. Ligand binding causes a conformation change that triggers signaling via guanine nucleotide-binding proteins (G proteins) and modulates the activity of downstream effectors, such as adenylate cyclase that it inhibits. The protein is Metabotropic glutamate receptor 7 (Grm7) of Rattus norvegicus (Rat).